The chain runs to 553 residues: Probable malate:quinone oxidoreductase (553 aa).

Residues 524-553 form a disordered region; it reads PPPKIDVNTPSQATGTAPARPAKASADMAL.

This sequence belongs to the MQO family. FAD serves as cofactor.

It carries out the reaction (S)-malate + a quinone = a quinol + oxaloacetate. It participates in carbohydrate metabolism; tricarboxylic acid cycle; oxaloacetate from (S)-malate (quinone route): step 1/1. This Burkholderia lata (strain ATCC 17760 / DSM 23089 / LMG 22485 / NCIMB 9086 / R18194 / 383) protein is Probable malate:quinone oxidoreductase.